We begin with the raw amino-acid sequence, 277 residues long: Undecaprenyl-diphosphatase 1 (277 aa).

8 helical membrane passes run 1–21 (MSLL…FLPI), 39–58 (AGFS…VILY), 85–105 (FWFA…GILF), 113–133 (FKAP…LIII), 147–167 (MTIW…IPGL), 191–211 (SFLL…DDLI), 226–246 (ASFV…LNLV), and 251–271 (LVYF…FQDA).

The protein belongs to the UppP family.

Its subcellular location is the cell membrane. It carries out the reaction di-trans,octa-cis-undecaprenyl diphosphate + H2O = di-trans,octa-cis-undecaprenyl phosphate + phosphate + H(+). Its function is as follows. Catalyzes the dephosphorylation of undecaprenyl diphosphate (UPP). Confers resistance to bacitracin. The sequence is that of Undecaprenyl-diphosphatase 1 from Shouchella clausii (strain KSM-K16) (Alkalihalobacillus clausii).